Consider the following 185-residue polypeptide: NADH-ubiquinone oxidoreductase chain 6 (185 aa).

A run of 5 helical transmembrane segments spans residues 4-24 (LTYY…IFII), 33-53 (ILYM…IGLG), 54-74 (IFSL…FLFI), 94-114 (LPLV…IYSN), and 159-179 (AFIL…PISI).

Belongs to the complex I subunit 6 family. As to quaternary structure, complex I is composed of 37 different subunits.

It is found in the mitochondrion membrane. The catalysed reaction is a ubiquinone + NADH + 5 H(+)(in) = a ubiquinol + NAD(+) + 4 H(+)(out). Its function is as follows. Core subunit of the mitochondrial membrane respiratory chain NADH dehydrogenase (Complex I) that is believed to belong to the minimal assembly required for catalysis. Complex I functions in the transfer of electrons from NADH to the respiratory chain. The immediate electron acceptor for the enzyme is believed to be ubiquinone. In Yarrowia lipolytica (strain CLIB 122 / E 150) (Yeast), this protein is NADH-ubiquinone oxidoreductase chain 6 (ND6).